We begin with the raw amino-acid sequence, 623 residues long: Leucine aminopeptidase 2 (623 aa).

A peptide contacts are provided by residues 136 to 138 (QCQ) and 273 to 278 (PYGGME). A Zn(2+)-binding site is contributed by H302. The active-site Proton acceptor is the E303. Zn(2+) contacts are provided by H306 and E325. Y390 serves as the catalytic Proton donor.

It belongs to the peptidase M1 family. It depends on Zn(2+) as a cofactor.

The protein resides in the cytoplasm. The protein localises to the nucleus. The catalysed reaction is an epoxide + H2O = an ethanediol. In terms of biological role, aminopeptidase that preferentially cleaves di- and tripeptides. Also has low epoxide hydrolase activity (in vitro). Can hydrolyze the epoxide leukotriene LTA(4) but it forms preferentially 5,6-dihydroxy-7,9,11,14-eicosatetraenoic acid rather than the cytokine leukotriene B(4) as the product compared to the homologous mammalian enzyme (in vitro). This Phaeosphaeria nodorum (strain SN15 / ATCC MYA-4574 / FGSC 10173) (Glume blotch fungus) protein is Leucine aminopeptidase 2.